Reading from the N-terminus, the 941-residue chain is Bifunctional glutamine synthetase adenylyltransferase/adenylyl-removing enzyme (941 aa).

The tract at residues 1 to 431 (MSSAPPFAAA…TFRNAFRLAG (431 aa)) is adenylyl removase. Positions 447-941 (NGHAMRPHAG…DGTIAQAEVK (495 aa)) are adenylyl transferase.

This sequence belongs to the GlnE family. The cofactor is Mg(2+).

The catalysed reaction is [glutamine synthetase]-O(4)-(5'-adenylyl)-L-tyrosine + phosphate = [glutamine synthetase]-L-tyrosine + ADP. The enzyme catalyses [glutamine synthetase]-L-tyrosine + ATP = [glutamine synthetase]-O(4)-(5'-adenylyl)-L-tyrosine + diphosphate. Its function is as follows. Involved in the regulation of glutamine synthetase GlnA, a key enzyme in the process to assimilate ammonia. When cellular nitrogen levels are high, the C-terminal adenylyl transferase (AT) inactivates GlnA by covalent transfer of an adenylyl group from ATP to specific tyrosine residue of GlnA, thus reducing its activity. Conversely, when nitrogen levels are low, the N-terminal adenylyl removase (AR) activates GlnA by removing the adenylyl group by phosphorolysis, increasing its activity. The regulatory region of GlnE binds the signal transduction protein PII (GlnB) which indicates the nitrogen status of the cell. In Bordetella pertussis (strain Tohama I / ATCC BAA-589 / NCTC 13251), this protein is Bifunctional glutamine synthetase adenylyltransferase/adenylyl-removing enzyme.